The sequence spans 210 residues: Large ribosomal subunit protein uL4 (210 aa).

The segment at Phe56 to Ser80 is disordered.

It belongs to the universal ribosomal protein uL4 family. In terms of assembly, part of the 50S ribosomal subunit.

Functionally, one of the primary rRNA binding proteins, this protein initially binds near the 5'-end of the 23S rRNA. It is important during the early stages of 50S assembly. It makes multiple contacts with different domains of the 23S rRNA in the assembled 50S subunit and ribosome. Its function is as follows. Forms part of the polypeptide exit tunnel. In Solidesulfovibrio magneticus (strain ATCC 700980 / DSM 13731 / RS-1) (Desulfovibrio magneticus), this protein is Large ribosomal subunit protein uL4.